A 479-amino-acid polypeptide reads, in one-letter code: MSIVVKNNIHWVGQRDWEVRDFHGTEYKTLRGSSYNSYLIREEKNVLIDTVDHKFSREFVQNLRNEIDLADIDYIVINHAEEDHAGALTELMAQIPDTPIYCTANAIDSINGHHHHPEWNFNVVKTGDTLDIGNGKQLIFVETPMLHWPDSMMTYLTGDAVLFSNDAFGQHYCDEHLFNDEVDQTELFEQCQRYYANILTPFSRLVTPKITEILGFNLPVDMIATSHGVVWRDNPTQIVELYLKWAADYQEDRITIVYDTMSNNTRMMADAIAQGIAETDPRVAVKIFNVARSDKNEILTNVFRSKGVLVGTSTMNNVMMPKIAGLVEEMTGLRFRNKRASAFGSHGWSGGAVDRLSTRLQDAGFEMSLSLKAKWRPDQDALELCREHGREIARQWALAPLPQSTVNTVVEEETSAATTADLGPRMQCSVCQWIYDPAKGEPMQDVAPGTPWSEVPDNFLCPECSLGKDVFDELASEAK.

A zinc metallo-hydrolase region spans residues 30–210; that stretch reads LRGSSYNSYL…PFSRLVTPKI (181 aa). Fe cation-binding residues include His79, Glu81, Asp83, His147, Asp166, and His227. Residues 254-393 enclose the Flavodoxin-like domain; the sequence is ITIVYDTMSN…LCREHGREIA (140 aa). FMN is bound by residues 260-264 and 342-369; these read TMSNN and AFGSHGWSGGAVDRLSTRLQDAGFEMSL. Residues 423-474 form the Rubredoxin-like domain; sequence GPRMQCSVCQWIYDPAKGEPMQDVAPGTPWSEVPDNFLCPECSLGKDVFDEL. 4 residues coordinate Fe cation: Cys428, Cys431, Cys461, and Cys464.

The protein in the N-terminal section; belongs to the zinc metallo-hydrolase group 3 family. Homotetramer. Fe cation is required as a cofactor. FMN serves as cofactor.

The protein localises to the cytoplasm. The protein operates within nitrogen metabolism; nitric oxide reduction. In terms of biological role, anaerobic nitric oxide reductase; uses NADH to detoxify nitric oxide (NO), protecting several 4Fe-4S NO-sensitive enzymes. Has at least 2 reductase partners, only one of which (NorW, flavorubredoxin reductase) has been identified. NO probably binds to the di-iron center; electrons enter from the NorW at rubredoxin and are transferred sequentially to the FMN center and the di-iron center. Also able to function as an aerobic oxygen reductase. The protein is Anaerobic nitric oxide reductase flavorubredoxin of Escherichia coli (strain UTI89 / UPEC).